We begin with the raw amino-acid sequence, 222 residues long: ATP synthase F(0) complex subunit a (222 aa).

6 helical membrane-spanning segments follow: residues 8–28 (FFYV…ILLP), 64–84 (WSLM…LGLL), 93–113 (QLTV…VPGF), 127–147 (QGTP…SLLI), 160–180 (ITAG…LSSI), and 197–219 (ILEL…LYLH).

The protein belongs to the ATPase A chain family. Component of the ATP synthase complex composed at least of ATP5F1A/subunit alpha, ATP5F1B/subunit beta, ATP5MC1/subunit c (homooctomer), MT-ATP6/subunit a, MT-ATP8/subunit 8, ATP5ME/subunit e, ATP5MF/subunit f, ATP5MG/subunit g, ATP5MK/subunit k, ATP5MJ/subunit j, ATP5F1C/subunit gamma, ATP5F1D/subunit delta, ATP5F1E/subunit epsilon, ATP5PF/subunit F6, ATP5PB/subunit b, ATP5PD/subunit d, ATP5PO/subunit OSCP. ATP synthase complex consists of a soluble F(1) head domain (subunits alpha(3) and beta(3)) - the catalytic core - and a membrane F(0) domain - the membrane proton channel (subunits c, a, 8, e, f, g, k and j). These two domains are linked by a central stalk (subunits gamma, delta, and epsilon) rotating inside the F1 region and a stationary peripheral stalk (subunits F6, b, d, and OSCP). Interacts with DNAJC30; interaction is direct.

The protein resides in the mitochondrion inner membrane. It carries out the reaction H(+)(in) = H(+)(out). In terms of biological role, subunit a, of the mitochondrial membrane ATP synthase complex (F(1)F(0) ATP synthase or Complex V) that produces ATP from ADP in the presence of a proton gradient across the membrane which is generated by electron transport complexes of the respiratory chain. ATP synthase complex consist of a soluble F(1) head domain - the catalytic core - and a membrane F(1) domain - the membrane proton channel. These two domains are linked by a central stalk rotating inside the F(1) region and a stationary peripheral stalk. During catalysis, ATP synthesis in the catalytic domain of F(1) is coupled via a rotary mechanism of the central stalk subunits to proton translocation. With the subunit c (ATP5MC1), forms the proton-conducting channel in the F(0) domain, that contains two crucial half-channels (inlet and outlet) that facilitate proton movement from the mitochondrial intermembrane space (IMS) into the matrix. Protons are taken up via the inlet half-channel and released through the outlet half-channel, following a Grotthuss mechanism. The sequence is that of ATP synthase F(0) complex subunit a from Loxodonta africana (African elephant).